A 3392-amino-acid polypeptide reads, in one-letter code: MNNQRKKTGRPSFNMLKRARNRVSTVSQLAKRFSKGLLSGQGPMKLVMAFIAFLRFLAIPPTAGILARWGSFKKNGAIKVLRGFKKEISNMLNIMNRRKRSVTMLLMLLPTALAFHLTTRGGEPHMIVSKQERGKSLLFKTSAGVNMCTLIAMDLGELCEDTMTYKCPRITETEPDDVDCWCNATETWVTYGTCSQTGEHRRDKRSVALAPHVGLGLETRTETWMSSEGAWKQIQKVETWALRHPGFTVIALFLAHAIGTSITQKGIIFILLMLVTPSMAMRCVGIGNRDFVEGLSGATWVDVVLEHGSCVTTMAKDKPTLDIELLKTEVTNPAVLRKLCIEAKISNTTTDSRCPTQGEATLVEEQDTNFVCRRTFVDRGWGNGCGLFGKGSLITCAKFKCVTKLEGKIVQYENLKYSVIVTVHTGDQHQVGNETTEHGTTATITPQAPTSEIQLTDYGALTLDCSPRTGLDFNEMVLLTMEKKSWLVHKQWFLDLPLPWTSGASTSQETWNRQDLLVTFKTAHAKKQEVVVLGSQEGAMHTALTGATEIQTSGTTTIFAGHLKCRLKMDKLTLKGMSYVMCTGSFKLEKEVAETQHGTVLVQVKYEGTDAPCKIPFSSQDEKGVTQNGRLITANPIVTDKEKPVNIEAEPPFGESYIVVGAGEKALKLSWFKKGSSIGKMFEATARGARRMAILGDTAWDFGSIGGVFTSVGKLIHQIFGTAYGVLFSGVSWTMKIGIGILLTWLGLNSRSTSLSMTCIAVGMVTLYLGVMVQADSGCVINWKGRELKCGSGIFVTNEVHTWTEQYKFQADSPKRLSAAIGKAWEEGVCGIRSATRLENIMWKQISNELNHILLENDMKFTVVVGDVSGILAQGKKMIRPQPMEHKYSWKSWGKAKIIGADVQNTTFIIDGPNTPECPDNQRAWNIWEVEDYGFGIFTTNIWLKLRDSYTQVCDHRLMSAAIKDSKAVHADMGYWIESEKNETWKLARASFIEVKTCIWPKSHTLWSNGVLESEMIIPKIYGGPISQHNYRPGYFTQTAGPWHLGKLELDFDLCEGTTVVVDEHCGNRGPSLRTTTVTGKTIHEWCCRSCTLPPLRFKGEDGCWYGMEIRPVKEKEENLVKSMVSAGSGEVDSFSLGLLCISIMIEEVMRSRWSRKMLMTGTLAVFLLLTMGQLTWNDLIRLCIMVGANASDKMGMGTTYLALMATFRMRPMFAVGLLFRRLTSREVLLLTVGLSLVASVELPNSLEELGDGLAMGIMMLKLLTDFQSHQLWATLLSLTFVKTTFSLHYAWKTMAMILSIVSLFPLCLSTTSQKTTWLPVLLGSLGCKPLTMFLITENKIWGRKSWPLNEGIMAVGIVSILLSSLLKNDVPLAGPLIAGGMLIACYVISGSSADLSLEKAAEVSWEEEAEHSGASHNILVEVQDDGTMKIKDEERDDTLTILLKATLLAISGVYPMSIPATLFVWYFWQKKKQRSGVLWDTPSPPEVERAVLDDGIYRILQRGLLGRSQVGVGVFQEGVFHTMWHVTRGAVLMYQGKRLEPSWASVKKDLISYGGGWRFQGSWNAGEEVQVIAVEPGKNPKNVQTAPGTFKTPEGEVGAIALDFKPGTSGSPIVNREGKIVGLYGNGVVTTSGTYVSAIAQAKASQEGPLPEIEDEVFRKRNLTIMDLHPGSGKTRRYLPAIVREAIRRNVRTLVLAPTRVVASEMAEALKGMPIRYQTTAVKSEHTGKEIVDLMCHATFTMRLLSPVRVPNYNMIIMDEAHFTDPASIAARGYISTRVGMGEAAAIFMTATPPGSVEAFPQSNAVIQDEERDIPERSWNSGYDWITDFPGKTVWFVPSIKSGNDIANCLRKNGKRVVQLSRKTFDTEYQKTKNNDWDYVVTTDISEMGANFRADRVIDPRRCLKPVILKDGPERVILAGPMPVTVASAAQRRGRIGRNQNKEGDQYIYMGQPLNNDEDHAHWTEAKMLLDNINTPEGIIPALFEPEREKSAAIDGEYRLRGEARKTFVELMRRGDLPVWLSYKVASEGFQYSDRRWCFDGERNNQVLEENMDVEIWTKEGERKKLRPRWLDARTYSDPLALREFKEFAAGRRSVSGDLILEIGKLPQHLTQRAQNALDNLVMLHNSEQGGKAYRHAMEELPDTIETLMLLALIAVLTGGVTLFFLSGRGLGKTSIGLLCVIASSALLWMASVEPHWIAASIILEFFLMVLLIPEPDRQRTPQDNQLAYVVIGLLFMILTAAANEMGLLETTKKDLGIGHAAAENHHHAAMLDVDLHPASAWTLYAVATTIITPMMRHTIENTTANISLTAIANQAAILMGLDKGWPISKMDIGVPLLALGCYSQVNPLTLTAAVFMLVAHYAIIGPGLQAKATREAQKRTAAGIMKNPTVDGIVAIDLDPVVYDAKFEKQLGQIMLLILCTSQILLMRTTWALCESITLATGPLTTLWEGSPGKFWNTTIAVSMANIFRGSYLAGAGLAFSLMKSLGGGRRGTGAQGETLGEKWKRQLNQLSKSEFNTYKRSGIIEVDRSEAKEGLKRGEPTKHAVSRGTAKLRWFVERNLVKPEGKVIDLGCGRGGWSYYCAGLKKVTEVKGYTKGGPGHEEPIPMATYGWNLVKLYSGKDVFFTPPEKCDTLLCDIGESSPNPTIEEGRTLRVLKMVEPWLRGNQFCIKILNPYMPSVVETLEQMQRKHGGMLVRNPLSRNSTHEMYWVSCGTGNIVSAVNMTSRMLLNRFTMAHRKPTYERDVDLGAGTRHVAVEPEVANLDIIGQRIENIKNGHKSTWHYDEDNPYKTWAYHGSYEVKPSGSASSMVNGVVRLLTKPWDVIPMVTQIAMTDTTPFGQQRVFKEKVDTRTPKAKRGTAQIMEVTARWLWGFLSRNKKPRICTREEFTRKVRSNAAIGAVFVDENQWNSAKEAVEDERFWDLVHRERELHKQGKCATCVYNMMGKREKKLGEFGKAKGSRAIWYMWLGARFLEFEALGFMNEDHWFSRENSLSGVEGEGLHKLGYILRDISKIPGGNMYADDTAGWDTRITEDDLQNEAKITDIMEPEHALLATSIFKLTYQNKVVRVQRPAKNGTVMDVISRRDQRGSGQVGTYGLNTFTNMEAQLIRQMESEGIFSPSELETPNLAERVLDWLKKHGTERLKRMAISGDDCVVKPIDDRFATALTALNDMGKVRKDIPQWEPSKGWNDWQQVPFCSHHFHQLIMKDGREIVVPCRNQDELVGRARVSQGAGWSLRETACLGKSYAQMWQLMYFHRRDLRLAANAICSAVPVDWVPTSRTTWSIHAHHQWMTTEDMLSVWNRVWIEENPWMEDKTHVSSWEDVPYLGKREDRWCGSLIGLTARATWATNIQVAINQVRRLIGNENYLDFMTSMKRFKNESDPEGALW.

Residues 1–15 (MNNQRKKTGRPSFNM) form an interaction with host EXOC1 region. Topologically, residues 1–101 (MNNQRKKTGR…LNIMNRRKRS (101 aa)) are cytoplasmic. Positions 37–72 (LLSGQGPMKLVMAFIAFLRFLAIPPTAGILARWGSF) are hydrophobic; homodimerization of capsid protein C. A propeptide spans 101–114 (SVTMLLMLLPTALA) (ER anchor for the capsid protein C, removed in mature form by serine protease NS3). Residues 102-119 (VTMLLMLLPTALAFHLTT) form a helical membrane-spanning segment. Topologically, residues 120-242 (RGGEPHMIVS…QIQKVETWAL (123 aa)) are extracellular. A glycan (N-linked (GlcNAc...) asparagine; by host) is linked at Asn183. A helical transmembrane segment spans residues 243–260 (RHPGFTVIALFLAHAIGT). Ser261 is a topological domain (cytoplasmic). Residues 262 to 280 (ITQKGIIFILLMLVTPSMA) traverse the membrane as a helical segment. Residues 281–725 (MRCVGIGNRD…IHQIFGTAYG (445 aa)) are Extracellular-facing. 4 disulfides stabilise this stretch: Cys283-Cys310, Cys340-Cys401, Cys354-Cys385, and Cys372-Cys396. Asn347 carries N-linked (GlcNAc...) asparagine; by host glycosylation. The segment at 378–391 (DRGWGNGCGLFGKG) is fusion peptide. Asn433 carries N-linked (GlcNAc...) asparagine; by host glycosylation. Intrachain disulfides connect Cys465–Cys565 and Cys582–Cys613. Residues 726 to 746 (VLFSGVSWTMKIGIGILLTWL) form a helical membrane-spanning segment. Residues 747–752 (GLNSRS) lie on the Cytoplasmic side of the membrane. The helical transmembrane segment at 753-773 (TSLSMTCIAVGMVTLYLGVMV) threads the bilayer. The Extracellular portion of the chain corresponds to 774 to 1195 (QADSGCVINW…MVGANASDKM (422 aa)). Disulfide bonds link Cys779–Cys790, Cys830–Cys918, Cys954–Cys998, Cys1055–Cys1104, Cys1066–Cys1088, and Cys1087–Cys1091. N-linked (GlcNAc...) asparagine; by host glycans are attached at residues Asn905 and Asn982. Residue Asn1190 is glycosylated (N-linked (GlcNAc...) asparagine; by host). A helical membrane pass occupies residues 1196-1220 (GMGTTYLALMATFRMRPMFAVGLLF). Over 1221–1226 (RRLTSR) the chain is Cytoplasmic. Residues 1227–1245 (EVLLLTVGLSLVASVELPN) traverse the membrane as a helical segment. Over 1246-1269 (SLEELGDGLAMGIMMLKLLTDFQS) the chain is Lumenal. Residues 1270–1290 (HQLWATLLSLTFVKTTFSLHY) traverse the membrane as a helical segment. Residue Ala1291 is a topological domain, cytoplasmic. The chain crosses the membrane as a helical span at residues 1292-1310 (WKTMAMILSIVSLFPLCLS). Residues 1311-1315 (TTSQK) lie on the Lumenal side of the membrane. Residues 1316-1336 (TTWLPVLLGSLGCKPLTMFLI) traverse the membrane as a helical segment. Over 1337–1351 (TENKIWGRKSWPLNE) the chain is Cytoplasmic. A helical membrane pass occupies residues 1352 to 1370 (GIMAVGIVSILLSSLLKND). A topological domain (lumenal) is located at residue Val1371. The chain crosses the membrane as a helical span at residues 1372 to 1391 (PLAGPLIAGGMLIACYVISG). Topologically, residues 1392 to 1447 (SSADLSLEKAAEVSWEEEAEHSGASHNILVEVQDDGTMKIKDEERDDTLTILLKAT) are cytoplasmic. Positions 1398 to 1437 (LEKAAEVSWEEEAEHSGASHNILVEVQDDGTMKIKDEERD) are interacts with and activates NS3 protease. An intramembrane region (helical) is located at residues 1448 to 1468 (LLAISGVYPMSIPATLFVWYF). Topologically, residues 1469–2148 (WQKKKQRSGV…MEELPDTIET (680 aa)) are cytoplasmic. The 178-residue stretch at 1476–1653 (SGVLWDTPSP…KASQEGPLPE (178 aa)) folds into the Peptidase S7 domain. Active-site charge relay system; for serine protease NS3 activity residues include His1526, Asp1550, and Ser1610. Residues 1656-1812 (DEVFRKRNLT…QSNAVIQDEE (157 aa)) form the Helicase ATP-binding domain. The interval 1660–1663 (RKRN) is important for RNA-binding. 1669 to 1676 (LHPGSGKT) is an ATP binding site. The DEAH box signature appears at 1760 to 1763 (DEAH). Residues 1822-1988 (SGYDWITDFP…GIIPALFEPE (167 aa)) form the Helicase C-terminal domain. At Lys1864 the chain carries N6-acetyllysine; by host. Residues 2149-2169 (LMLLALIAVLTGGVTLFFLSG) form a helical membrane-spanning segment. At 2170 to 2171 (RG) the chain is on the lumenal side. An intramembrane region (helical) is located at residues 2172-2192 (LGKTSIGLLCVIASSALLWMA). A topological domain (lumenal) is located at residue Ser2193. The helical transmembrane segment at 2194 to 2214 (VEPHWIAASIILEFFLMVLLI) threads the bilayer. Residues 2215 to 2229 (PEPDRQRTPQDNQLA) lie on the Cytoplasmic side of the membrane. Residues 2230 to 2244 (YVVIGLLFMILTAAA) traverse the membrane as a helical segment. The Lumenal segment spans residues 2245 to 2276 (NEMGLLETTKKDLGIGHAAAENHHHAAMLDVD). Positions 2277–2297 (LHPASAWTLYAVATTIITPMM) form an intramembrane region, helical. The Lumenal portion of the chain corresponds to 2298 to 2349 (RHTIENTTANISLTAIANQAAILMGLDKGWPISKMDIGVPLLALGCYSQVNP). Residues Asn2303 and Asn2307 are each glycosylated (N-linked (GlcNAc...) asparagine; by host). The helical transmembrane segment at 2350–2370 (LTLTAAVFMLVAHYAIIGPGL) threads the bilayer. The Cytoplasmic segment spans residues 2371-2415 (QAKATREAQKRTAAGIMKNPTVDGIVAIDLDPVVYDAKFEKQLGQ). The helical transmembrane segment at 2416–2436 (IMLLILCTSQILLMRTTWALC) threads the bilayer. Residues 2437 to 2461 (ESITLATGPLTTLWEGSPGKFWNTT) lie on the Lumenal side of the membrane. Asn2459 is a glycosylation site (N-linked (GlcNAc...) asparagine; by host). A helical transmembrane segment spans residues 2462 to 2482 (IAVSMANIFRGSYLAGAGLAF). Over 2483–3392 (SLMKSLGGGR…NESDPEGALW (910 aa)) the chain is Cytoplasmic. The mRNA cap 0-1 NS5-type MT domain maps to 2495–2756 (TGAQGETLGE…DVDLGAGTRH (262 aa)). Residue Ser2549 participates in S-adenosyl-L-methionine binding. Residue Ser2549 is modified to Phosphoserine. Lys2554 serves as the catalytic For 2'-O-MTase activity. Residues 2570-2573 (VIDL) carry the SUMO-interacting motif motif. Gly2579, Trp2580, Thr2597, Lys2598, Asp2624, and Val2625 together coordinate S-adenosyl-L-methionine. The active-site For 2'-O-MTase activity is the Asp2639. Residue Ile2640 participates in S-adenosyl-L-methionine binding. Catalysis depends on for 2'-O-MTase activity residues Lys2673 and Glu2709. Tyr2711 serves as a coordination point for S-adenosyl-L-methionine. Residues Glu2930, His2934, Cys2939, and Cys2942 each coordinate Zn(2+). A RdRp catalytic domain is found at 3020 to 3169 (GNMYADDTAG…KPIDDRFATA (150 aa)). Residues His3204, Cys3220, and Cys3339 each coordinate Zn(2+).

The protein in the N-terminal section; belongs to the class I-like SAM-binding methyltransferase superfamily. mRNA cap 0-1 NS5-type methyltransferase family. As to quaternary structure, homodimer. Interacts (via N-terminus) with host EXOC1 (via C-terminus); this interaction results in EXOC1 degradation through the proteasome degradation pathway. In terms of assembly, forms heterodimers with envelope protein E in the endoplasmic reticulum and Golgi. Homodimer; in the endoplasmic reticulum and Golgi. Interacts with protein prM. Interacts with non-structural protein 1. As to quaternary structure, homodimer; Homohexamer when secreted. Interacts with envelope protein E. In terms of assembly, interacts (via N-terminus) with serine protease NS3. Forms a heterodimer with serine protease NS3. May form homooligomers. As to quaternary structure, forms a heterodimer with NS2B. Interacts with NS4B. Interacts with unphosphorylated RNA-directed RNA polymerase NS5; this interaction stimulates RNA-directed RNA polymerase NS5 guanylyltransferase activity. Interacts with host SHFL. In terms of assembly, interacts with host MAVS; this interaction inhibits the synthesis of IFN-beta. Interacts with host SHFL. Interacts with host AUP1; the interaction occurs in the presence of Dengue virus NS4B and induces lipophagy which facilitates production of virus progeny particles. Interacts with serine protease NS3. As to quaternary structure, homodimer. Interacts with host STAT2; this interaction inhibits the phosphorylation of the latter, and, when all viral proteins are present (polyprotein), targets STAT2 for degradation. Interacts with serine protease NS3. Sumoylation of RNA-directed RNA polymerase NS5 increases NS5 protein stability allowing proper viral RNA replication. Post-translationally, specific enzymatic cleavages in vivo yield mature proteins. Cleavages in the lumen of endoplasmic reticulum are performed by host signal peptidase, whereas cleavages in the cytoplasmic side are performed by the Serine protease NS3. Signal cleavage at the 2K-4B site requires a prior NS3 protease-mediated cleavage at the 4A-2K site. In terms of processing, cleaved in post-Golgi vesicles by a host furin, releasing the mature small envelope protein M, and peptide pr. This cleavage is incomplete as up to 30% of viral particles still carry uncleaved prM. N-glycosylated. The excreted form is glycosylated and this is required for efficient secretion of the protein from infected cells. Post-translationally, acetylated by host KAT5. Acetylation modulates NS3 RNA-binding and unwinding activities and plays an important positive role for viral replication. In terms of processing, phosphorylated on serines residues. This phosphorylation may trigger NS5 nuclear localization. N-glycosylated.

The protein localises to the virion. It localises to the host nucleus. The protein resides in the host cytoplasm. It is found in the host perinuclear region. Its subcellular location is the secreted. The protein localises to the virion membrane. It localises to the host endoplasmic reticulum membrane. The protein resides in the host mitochondrion. The enzyme catalyses Selective hydrolysis of -Xaa-Xaa-|-Yaa- bonds in which each of the Xaa can be either Arg or Lys and Yaa can be either Ser or Ala.. The catalysed reaction is RNA(n) + a ribonucleoside 5'-triphosphate = RNA(n+1) + diphosphate. It catalyses the reaction a ribonucleoside 5'-triphosphate + H2O = a ribonucleoside 5'-diphosphate + phosphate + H(+). It carries out the reaction ATP + H2O = ADP + phosphate + H(+). The enzyme catalyses a 5'-end (5'-triphosphoguanosine)-ribonucleoside in mRNA + S-adenosyl-L-methionine = a 5'-end (N(7)-methyl 5'-triphosphoguanosine)-ribonucleoside in mRNA + S-adenosyl-L-homocysteine. The catalysed reaction is a 5'-end (N(7)-methyl 5'-triphosphoguanosine)-ribonucleoside in mRNA + S-adenosyl-L-methionine = a 5'-end (N(7)-methyl 5'-triphosphoguanosine)-(2'-O-methyl-ribonucleoside) in mRNA + S-adenosyl-L-homocysteine + H(+). Its function is as follows. Plays a role in virus budding by binding to the cell membrane and gathering the viral RNA into a nucleocapsid that forms the core of a mature virus particle. During virus entry, may induce genome penetration into the host cytoplasm after hemifusion induced by the surface proteins. Can migrate to the cell nucleus where it modulates host functions. Overcomes the anti-viral effects of host EXOC1 by sequestering and degrading the latter through the proteasome degradation pathway. Inhibits RNA silencing by interfering with host Dicer. In terms of biological role, prevents premature fusion activity of envelope proteins in trans-Golgi by binding to envelope protein E at pH6.0. After virion release in extracellular space, gets dissociated from E dimers. Functionally, acts as a chaperone for envelope protein E during intracellular virion assembly by masking and inactivating envelope protein E fusion peptide. prM is the only viral peptide matured by host furin in the trans-Golgi network probably to avoid catastrophic activation of the viral fusion activity in acidic Golgi compartment prior to virion release. prM-E cleavage is inefficient, and many virions are only partially matured. These uncleaved prM would play a role in immune evasion. Its function is as follows. May play a role in virus budding. Exerts cytotoxic effects by activating a mitochondrial apoptotic pathway through M extodomain. May display a viroporin activity. Binds to host cell surface receptor and mediates fusion between viral and cellular membranes. Envelope protein is synthesized in the endoplasmic reticulum in the form of heterodimer with protein prM. They play a role in virion budding in the ER, and the newly formed immature particle is covered with 60 spikes composed of heterodimer between precursor prM and envelope protein E. The virion is transported to the Golgi apparatus where the low pH causes dissociation of PrM-E heterodimers and formation of E homodimers. prM-E cleavage is ineficient, and many virions are only partially matured. These uncleaved prM would play a role in immune evasion. In terms of biological role, involved in immune evasion, pathogenesis and viral replication. Once cleaved off the polyprotein, is targeted to three destinations: the viral replication cycle, the plasma membrane and the extracellular compartment. Essential for viral replication. Required for formation of the replication complex and recruitment of other non-structural proteins to the ER-derived membrane structures. Excreted as a hexameric lipoparticle that plays a role against host immune response. Antagonizing the complement function. Binds to the host macrophages and dendritic cells. Inhibits signal transduction originating from Toll-like receptor 3 (TLR3). Functionally, disrupts the host endothelial glycocalyx layer of host pulmonary microvascular endothelial cells, inducing degradation of sialic acid and shedding of heparan sulfate proteoglycans. NS1 induces expression of sialidases, heparanase, and activates cathepsin L, which activates heparanase via enzymatic cleavage. These effects are probably linked to the endothelial hyperpermeability observed in severe dengue disease. Its function is as follows. Component of the viral RNA replication complex that functions in virion assembly and antagonizes the host immune response. Required cofactor for the serine protease function of NS3. May have membrane-destabilizing activity and form viroporins. In terms of biological role, displays three enzymatic activities: serine protease, NTPase and RNA helicase. NS3 serine protease, in association with NS2B, performs its autocleavage and cleaves the polyprotein at dibasic sites in the cytoplasm: C-prM, NS2A-NS2B, NS2B-NS3, NS3-NS4A, NS4A-2K and NS4B-NS5. NS3 RNA helicase binds RNA and unwinds dsRNA in the 3' to 5' direction. Functionally, regulates the ATPase activity of the NS3 helicase activity. NS4A allows NS3 helicase to conserve energy during unwinding. Plays a role in the inhibition of the host innate immune response. Interacts with host MAVS and thereby prevents the interaction between RIGI and MAVS. In turn, IFN-beta production is impaired. Interacts with host AUP1 which mediates induction of lipophagy in host cells and facilitates production of virus progeny particles. Its function is as follows. Functions as a signal peptide for NS4B and is required for the interferon antagonism activity of the latter. Induces the formation of ER-derived membrane vesicles where the viral replication takes place. Inhibits interferon (IFN)-induced host STAT1 phosphorylation and nuclear translocation, thereby preventing the establishment of a cellular antiviral state by blocking the IFN-alpha/beta pathway. In terms of biological role, replicates the viral (+) and (-) RNA genome, and performs the capping of genomes in the cytoplasm. NS5 methylates viral RNA cap at guanine N-7 and ribose 2'-O positions. Besides its role in RNA genome replication, also prevents the establishment of cellular antiviral state by blocking the interferon-alpha/beta (IFN-alpha/beta) signaling pathway. Inhibits host TYK2 and STAT2 phosphorylation, thereby preventing activation of JAK-STAT signaling pathway. This chain is Genome polyprotein, found in Aedes aegypti (Yellowfever mosquito).